A 374-amino-acid polypeptide reads, in one-letter code: UDP-N-acetylglucosamine--N-acetylmuramyl-(pentapeptide) pyrophosphoryl-undecaprenol N-acetylglucosamine transferase (374 aa).

Residues 13–15, N124, R165, S193, and Q294 contribute to the UDP-N-acetyl-alpha-D-glucosamine site; that span reads TGG.

The protein belongs to the glycosyltransferase 28 family. MurG subfamily.

The protein resides in the cell inner membrane. It catalyses the reaction di-trans,octa-cis-undecaprenyl diphospho-N-acetyl-alpha-D-muramoyl-L-alanyl-D-glutamyl-meso-2,6-diaminopimeloyl-D-alanyl-D-alanine + UDP-N-acetyl-alpha-D-glucosamine = di-trans,octa-cis-undecaprenyl diphospho-[N-acetyl-alpha-D-glucosaminyl-(1-&gt;4)]-N-acetyl-alpha-D-muramoyl-L-alanyl-D-glutamyl-meso-2,6-diaminopimeloyl-D-alanyl-D-alanine + UDP + H(+). The protein operates within cell wall biogenesis; peptidoglycan biosynthesis. Cell wall formation. Catalyzes the transfer of a GlcNAc subunit on undecaprenyl-pyrophosphoryl-MurNAc-pentapeptide (lipid intermediate I) to form undecaprenyl-pyrophosphoryl-MurNAc-(pentapeptide)GlcNAc (lipid intermediate II). The polypeptide is UDP-N-acetylglucosamine--N-acetylmuramyl-(pentapeptide) pyrophosphoryl-undecaprenol N-acetylglucosamine transferase (Rhizobium etli (strain CIAT 652)).